A 163-amino-acid polypeptide reads, in one-letter code: Cyclic pyranopterin monophosphate synthase (163 aa).

Residues 75–77 (LCH) and 115–116 (ME) contribute to the substrate site. Residue aspartate 130 is part of the active site.

It belongs to the MoaC family. In terms of assembly, homohexamer; trimer of dimers.

The catalysed reaction is (8S)-3',8-cyclo-7,8-dihydroguanosine 5'-triphosphate = cyclic pyranopterin phosphate + diphosphate. The protein operates within cofactor biosynthesis; molybdopterin biosynthesis. Its function is as follows. Catalyzes the conversion of (8S)-3',8-cyclo-7,8-dihydroguanosine 5'-triphosphate to cyclic pyranopterin monophosphate (cPMP). In Variovorax paradoxus (strain S110), this protein is Cyclic pyranopterin monophosphate synthase.